The chain runs to 225 residues: Protein-L-isoaspartate O-methyltransferase (225 aa).

The active site involves Ser75.

It belongs to the methyltransferase superfamily. L-isoaspartyl/D-aspartyl protein methyltransferase family.

It is found in the cytoplasm. It carries out the reaction [protein]-L-isoaspartate + S-adenosyl-L-methionine = [protein]-L-isoaspartate alpha-methyl ester + S-adenosyl-L-homocysteine. Catalyzes the methyl esterification of L-isoaspartyl residues in peptides and proteins that result from spontaneous decomposition of normal L-aspartyl and L-asparaginyl residues. It plays a role in the repair and/or degradation of damaged proteins. This Stenotrophomonas maltophilia (strain K279a) protein is Protein-L-isoaspartate O-methyltransferase.